A 390-amino-acid polypeptide reads, in one-letter code: Elongation factor Tu 1 (390 aa).

Residues 10 to 201 (KPHVNVGTIG…LDEYVAVPPR (192 aa)) enclose the tr-type G domain. The tract at residues 19–26 (GHVDHGKT) is G1. Residue 19–26 (GHVDHGKT) participates in GTP binding. Thr26 provides a ligand contact to Mg(2+). The tract at residues 55–59 (GITIA) is G2. The interval 76-79 (DCPG) is G3. Residues 76-80 (DCPGH) and 131-134 (NKAD) each bind GTP. The G4 stretch occupies residues 131–134 (NKAD). Positions 168-170 (SAL) are G5.

It belongs to the TRAFAC class translation factor GTPase superfamily. Classic translation factor GTPase family. EF-Tu/EF-1A subfamily. Monomer.

The protein localises to the cytoplasm. It catalyses the reaction GTP + H2O = GDP + phosphate + H(+). Its function is as follows. GTP hydrolase that promotes the GTP-dependent binding of aminoacyl-tRNA to the A-site of ribosomes during protein biosynthesis. The protein is Elongation factor Tu 1 of Wolbachia pipientis wMel.